We begin with the raw amino-acid sequence, 77 residues long: Sec-independent protein translocase protein TatA (77 aa).

A helical membrane pass occupies residues 1–21 (MGGLSIWHWLIVLLIVALVFG). A disordered region spans residues 40-77 (KDGMREGEAPADPQQLPRSGSVNVDAKDATRSSDSNKA). Positions 64–77 (DAKDATRSSDSNKA) are enriched in basic and acidic residues.

Belongs to the TatA/E family. The Tat system comprises two distinct complexes: a TatABC complex, containing multiple copies of TatA, TatB and TatC subunits, and a separate TatA complex, containing only TatA subunits. Substrates initially bind to the TatABC complex, which probably triggers association of the separate TatA complex to form the active translocon.

The protein resides in the cell inner membrane. Its function is as follows. Part of the twin-arginine translocation (Tat) system that transports large folded proteins containing a characteristic twin-arginine motif in their signal peptide across membranes. TatA could form the protein-conducting channel of the Tat system. This chain is Sec-independent protein translocase protein TatA, found in Burkholderia thailandensis (strain ATCC 700388 / DSM 13276 / CCUG 48851 / CIP 106301 / E264).